A 384-amino-acid polypeptide reads, in one-letter code: Potassium channel subfamily K member 18 (384 aa).

The Cytoplasmic portion of the chain corresponds to 1–23 (MEVSGHPQARRCCPEALGKLFPG). Residues 24–44 (LCFLCFLVTYALVGAVVFSAI) traverse the membrane as a helical segment. Asparagine 70 carries an N-linked (GlcNAc...) asparagine glycan. Residues 103–129 (FLSSLFFCCTVFSTVGYGYIYPVTRLG) constitute an intramembrane region (pore-forming). Positions 116, 117, 118, and 119 each coordinate K(+). The segment at 116–121 (TVGYGY) is selectivity filter 1. Residues 130–148 (KYLCMLYALFGIPLMFLVL) traverse the membrane as a helical segment. Topologically, residues 149 to 280 (TDTGDILATI…EVGQQVERLD (132 aa)) are cytoplasmic. Residues 200 to 205 (PQIIIS) are interaction with calcineurin. The interval 249–254 (RSNSCP) is interaction with YWHAH. A phosphoserine mark is found at serine 252 and serine 264. The helical transmembrane segment at 281–301 (IPLPIIALIVFAYISCAAAIL) threads the bilayer. Positions 314-328 (FYFCFVTLTTIGFGD) form an intramembrane region, pore-forming. Residues 323–328 (TIGFGD) are selectivity filter 2. Residues 335 to 355 (NFFLFFSIYIIVGMEIVFIAF) traverse the membrane as a helical segment. The Cytoplasmic segment spans residues 356 to 384 (KLVQNRLIDIYKNVMLFFAKGKFYHLVKK).

This sequence belongs to the two pore domain potassium channel (TC 1.A.1.8) family. Homodimer. Heterodimer with KCNK2. Heterodimer with KCNK10. Interacts with calcineurin. Interacts with YWHAH, in a phosphorylation-dependent manner. In terms of processing, N-glycosylated. Post-translationally, phosphorylation of Ser-264 is required for the binding of 14-3-3eta/YWHAH. Calcineurin-mediated dephosphorylation enhances channel activity. As to expression, expressed in dorsal root ganglion and trigeminal ganglion neurons. Detected at low levels in spinal cord. Expressed in regulatory T cells (at protein level).

Its subcellular location is the cell membrane. The catalysed reaction is K(+)(in) = K(+)(out). Activated by volatile anesthetics but inhibited by amide local anesthetics. Inhibited by Ba(2+) ions. Inhibited by free polyunsaturated fatty acids. Channel conductance is sensitive to intracellular pH, it decreases at acidic pH and increases at basic pH. In contrast to its mouse ortholog, it is not regulated by extracellular protons. Insensitive to changes in temperature. Functionally, k(+) channel that conducts outward and inward rectifying currents at depolarized and hyperpolarized membrane potentials, respectively. The outward rectifying currents are voltage-dependent, coupled to K(+) electrochemical gradient across the membrane, whereas the inward currents can be induced in response to activation of Ca(2+)-mobilizing receptors. Homo- and heterodimerizes to form functional channels with distinct regulatory and gating properties. In trigeminal ganglia sensory neurons, the heterodimers of KCNK18/TRESK and KCNK2/TREK-1 or KCNK10/TREK-2 inhibit neuronal firing and neurogenic inflammation by stabilizing the resting membrane potential at K(+) equilibrium potential as well as by regulating the threshold of action potentials and the spike frequency. In thymocytes, conducts K(+) currents upon T cell receptor (TCR) signaling leading to sustained Ca(2+) influx and NF-kappa-B activation, FOXP3 transcription and positive selection of regulatory T cell (Treg) progenitor subsets. Appears to mediate the analgesics effects of hydroxy-alpha-sanshool, a metabolite naturally present in Schezuan pepper and other Xanthoxylum plants. The sequence is that of Potassium channel subfamily K member 18 from Homo sapiens (Human).